The sequence spans 662 residues: FAST kinase domain-containing protein 3, mitochondrial (662 aa).

Residues 591–649 (IALCIDGPKRFCSNSKHLLGKEAIKQRHLQLLGYQVVQIPYHEIGMLKSRRELVEYLQR) enclose the RAP domain.

It belongs to the FAST kinase family. As to expression, expression detected in spleen, thymus, testis, ovary, colon, heart, smooth muscle, kidney, brain, lung, liver and white adipose tissue with highest expression in liver and thyroid.

The protein resides in the mitochondrion. Functionally, required for normal mitochondrial respiration. Increases steady-state levels and half-lives of a subset of mature mitochondrial mRNAs MT-ND2, MT-ND3, MT-CYTB, MT-CO2, and MT-ATP8/6. Promotes MT-CO1 mRNA translation and increases mitochondrial complex IV assembly and activity. The sequence is that of FAST kinase domain-containing protein 3, mitochondrial (FASTKD3) from Homo sapiens (Human).